The following is a 351-amino-acid chain: Anthranilate phosphoribosyltransferase (351 aa).

5-phospho-alpha-D-ribose 1-diphosphate contacts are provided by residues G80, 83 to 84 (GD), T88, 90 to 93 (NIST), 108 to 116 (KHGNRSVTS), and S120. Anthranilate is bound at residue G80. S92 lines the Mg(2+) pocket. N111 contacts anthranilate. R166 is an anthranilate binding site. The Mg(2+) site is built by D229 and E230.

This sequence belongs to the anthranilate phosphoribosyltransferase family. Homodimer. Requires Mg(2+) as cofactor.

It catalyses the reaction N-(5-phospho-beta-D-ribosyl)anthranilate + diphosphate = 5-phospho-alpha-D-ribose 1-diphosphate + anthranilate. The protein operates within amino-acid biosynthesis; L-tryptophan biosynthesis; L-tryptophan from chorismate: step 2/5. Its function is as follows. Catalyzes the transfer of the phosphoribosyl group of 5-phosphorylribose-1-pyrophosphate (PRPP) to anthranilate to yield N-(5'-phosphoribosyl)-anthranilate (PRA). The protein is Anthranilate phosphoribosyltransferase of Chlorobium phaeovibrioides (strain DSM 265 / 1930) (Prosthecochloris vibrioformis (strain DSM 265)).